The following is a 207-amino-acid chain: Ribosomal RNA small subunit methyltransferase G (207 aa).

S-adenosyl-L-methionine is bound by residues G76, Q81, 127–128 (VE), and R141.

Belongs to the methyltransferase superfamily. RNA methyltransferase RsmG family.

Its subcellular location is the cytoplasm. It catalyses the reaction guanosine(527) in 16S rRNA + S-adenosyl-L-methionine = N(7)-methylguanosine(527) in 16S rRNA + S-adenosyl-L-homocysteine. Its function is as follows. Specifically methylates the N7 position of guanine in position 527 of 16S rRNA. The chain is Ribosomal RNA small subunit methyltransferase G from Neisseria gonorrhoeae (strain ATCC 700825 / FA 1090).